Reading from the N-terminus, the 329-residue chain is DNA-directed RNA polymerase subunit alpha (329 aa).

Residues methionine 1 to arginine 235 form an alpha N-terminal domain (alpha-NTD) region. The alpha C-terminal domain (alpha-CTD) stretch occupies residues phenylalanine 249 to aspartate 329.

It belongs to the RNA polymerase alpha chain family. As to quaternary structure, homodimer. The RNAP catalytic core consists of 2 alpha, 1 beta, 1 beta' and 1 omega subunit. When a sigma factor is associated with the core the holoenzyme is formed, which can initiate transcription.

It carries out the reaction RNA(n) + a ribonucleoside 5'-triphosphate = RNA(n+1) + diphosphate. Functionally, DNA-dependent RNA polymerase catalyzes the transcription of DNA into RNA using the four ribonucleoside triphosphates as substrates. In Mannheimia succiniciproducens (strain KCTC 0769BP / MBEL55E), this protein is DNA-directed RNA polymerase subunit alpha.